Here is a 144-residue protein sequence, read N- to C-terminus: Large ribosomal subunit protein uL15 (144 aa).

The interval 1–52 (MYLNTISPMKKSNHSSKRKGRGIGSGKGKTSGRGHKGQRSRSGGKVRRGFEG) is disordered. 2 stretches are compositionally biased toward basic residues: residues 11–21 (KSNHSSKRKGR) and 30–47 (TSGR…GKVR).

Belongs to the universal ribosomal protein uL15 family. In terms of assembly, part of the 50S ribosomal subunit.

In terms of biological role, binds to the 23S rRNA. The chain is Large ribosomal subunit protein uL15 from Wigglesworthia glossinidia brevipalpis.